Here is a 467-residue protein sequence, read N- to C-terminus: Transcriptional modulator WTM2 (467 aa).

Over residues 1–12 (MAKSKSSQGASG) the composition is skewed to low complexity. Disordered regions lie at residues 1–22 (MAKS…PSLY) and 84–121 (TFYD…AFQD). A compositionally biased stretch (acidic residues) spans 87 to 100 (DDDDDDDNDDDDEE). WD repeat units lie at residues 244–282 (PGTN…KPLW), 287–327 (PKNG…LATT), and 349–389 (SGGD…SRND).

Its function is as follows. Transcriptional modulator with roles in meiotic regulation and silencing. In Saccharomyces cerevisiae (strain ATCC 204508 / S288c) (Baker's yeast), this protein is Transcriptional modulator WTM2 (WTM2).